A 278-amino-acid polypeptide reads, in one-letter code: MNPTQSDELRDEPRGAIELPVSRTRGGAVDTAHDFVGQEWPVALVFNGISHAVMMCTPCDLEAFAVGFAISEGIVARGSDIKDIEVILHADAPLPHAEVHLDVVQQAFAALKDRRRALAGRTGCGVCGIESIDLLDLAPERVPDTGFLARLAPDALARAAHALPAHQALTKLTGGLHAAAWCDATGAIRAAFEDVGRHNALDKLIGSLVLSRADTTDGFVFLSSRASYELVRKAARVGIPLVATISAPSSLAIEIAKAAGLRLVSFCRETGHVDYGTV.

The active-site Cysteine persulfide intermediate is Cys-124.

This sequence belongs to the FdhD family.

The protein resides in the cytoplasm. Required for formate dehydrogenase (FDH) activity. Acts as a sulfur carrier protein that transfers sulfur from IscS to the molybdenum cofactor prior to its insertion into FDH. In Burkholderia cenocepacia (strain ATCC BAA-245 / DSM 16553 / LMG 16656 / NCTC 13227 / J2315 / CF5610) (Burkholderia cepacia (strain J2315)), this protein is Sulfur carrier protein FdhD.